Here is a 130-residue protein sequence, read N- to C-terminus: Mitochondrial pyruvate carrier 1 (130 aa).

A run of 2 helical transmembrane segments spans residues 23 to 45 (LKYI…IAAI) and 55 to 77 (ISGP…ALSV).

Belongs to the mitochondrial pyruvate carrier (MPC) (TC 2.A.105) family. As to quaternary structure, the functional 150 kDa pyruvate import complex is a heteromer of MPC1 and either MPC2 or MPC3.

It localises to the mitochondrion. The protein localises to the mitochondrion inner membrane. Mediates the uptake of pyruvate into mitochondria. The polypeptide is Mitochondrial pyruvate carrier 1 (Saccharomyces cerevisiae (strain ATCC 204508 / S288c) (Baker's yeast)).